The primary structure comprises 178 residues: tRNA (cytidine(56)-2'-O)-methyltransferase (178 aa).

L88 provides a ligand contact to S-adenosyl-L-methionine.

It belongs to the aTrm56 family. In terms of assembly, homodimer.

It is found in the cytoplasm. The enzyme catalyses cytidine(56) in tRNA + S-adenosyl-L-methionine = 2'-O-methylcytidine(56) in tRNA + S-adenosyl-L-homocysteine + H(+). Specifically catalyzes the AdoMet-dependent 2'-O-ribose methylation of cytidine at position 56 in tRNAs. The polypeptide is tRNA (cytidine(56)-2'-O)-methyltransferase (Methanopyrus kandleri (strain AV19 / DSM 6324 / JCM 9639 / NBRC 100938)).